The chain runs to 444 residues: tRNA-2-methylthio-N(6)-dimethylallyladenosine synthase (444 aa).

The MTTase N-terminal domain maps to 8-122 (KTFYIETFGC…LAEMLVQIES (115 aa)). Positions 17, 53, 85, 160, 164, and 167 each coordinate [4Fe-4S] cluster. The Radical SAM core domain occupies 146–376 (RGNAHRGYIT…MEHQREIQRA (231 aa)). Residues 379–444 (RKHIGETIEV…PNSLVGELVG (66 aa)) enclose the TRAM domain.

Belongs to the methylthiotransferase family. MiaB subfamily. Monomer. Requires [4Fe-4S] cluster as cofactor.

It localises to the cytoplasm. It catalyses the reaction N(6)-dimethylallyladenosine(37) in tRNA + (sulfur carrier)-SH + AH2 + 2 S-adenosyl-L-methionine = 2-methylsulfanyl-N(6)-dimethylallyladenosine(37) in tRNA + (sulfur carrier)-H + 5'-deoxyadenosine + L-methionine + A + S-adenosyl-L-homocysteine + 2 H(+). Catalyzes the methylthiolation of N6-(dimethylallyl)adenosine (i(6)A), leading to the formation of 2-methylthio-N6-(dimethylallyl)adenosine (ms(2)i(6)A) at position 37 in tRNAs that read codons beginning with uridine. In Koribacter versatilis (strain Ellin345), this protein is tRNA-2-methylthio-N(6)-dimethylallyladenosine synthase.